The sequence spans 401 residues: Glycerol-3-phosphate dehydrogenase [NAD(+)] 1 (401 aa).

NAD(+) contacts are provided by residues 40 to 45 (GSGNWG), phenylalanine 128, lysine 151, and alanine 184. Lysine 151 is a substrate binding site. Lysine 244 acts as the Proton acceptor in catalysis. Positions 309 and 338 each coordinate NAD(+). 309-310 (RN) serves as a coordination point for substrate.

Belongs to the NAD-dependent glycerol-3-phosphate dehydrogenase family.

The protein resides in the cytoplasm. The enzyme catalyses sn-glycerol 3-phosphate + NAD(+) = dihydroxyacetone phosphate + NADH + H(+). In Zygosaccharomyces rouxii, this protein is Glycerol-3-phosphate dehydrogenase [NAD(+)] 1 (GPD1).